We begin with the raw amino-acid sequence, 485 residues long: ATP synthase subunit beta 2 (485 aa).

Residues 1 to 10 (MSGMGEKSEQ) show a composition bias toward basic and acidic residues. Positions 1–27 (MSGMGEKSEQISKSARSTDPQEQESVA) are disordered. Residues 11–24 (ISKSARSTDPQEQE) show a composition bias toward polar residues. 177–184 (GGAGVGKT) is an ATP binding site.

The protein belongs to the ATPase alpha/beta chains family. As to quaternary structure, F-type ATPases have 2 components, CF(1) - the catalytic core - and CF(0) - the membrane proton channel. CF(1) has five subunits: alpha(3), beta(3), gamma(1), delta(1), epsilon(1). CF(0) has three main subunits: a(1), b(2) and c(9-12). The alpha and beta chains form an alternating ring which encloses part of the gamma chain. CF(1) is attached to CF(0) by a central stalk formed by the gamma and epsilon chains, while a peripheral stalk is formed by the delta and b chains.

It localises to the cell inner membrane. It catalyses the reaction ATP + H2O + 4 H(+)(in) = ADP + phosphate + 5 H(+)(out). Produces ATP from ADP in the presence of a proton gradient across the membrane. The catalytic sites are hosted primarily by the beta subunits. The polypeptide is ATP synthase subunit beta 2 (Nitrosomonas eutropha (strain DSM 101675 / C91 / Nm57)).